Reading from the N-terminus, the 161-residue chain is Protein-export protein SecB (161 aa).

Belongs to the SecB family. In terms of assembly, homotetramer, a dimer of dimers. One homotetramer interacts with 1 SecA dimer.

The protein resides in the cytoplasm. One of the proteins required for the normal export of preproteins out of the cell cytoplasm. It is a molecular chaperone that binds to a subset of precursor proteins, maintaining them in a translocation-competent state. It also specifically binds to its receptor SecA. The protein is Protein-export protein SecB of Rhodopseudomonas palustris (strain BisA53).